The following is a 156-amino-acid chain: Small ribosomal subunit protein uS7 (156 aa).

The protein belongs to the universal ribosomal protein uS7 family. As to quaternary structure, part of the 30S ribosomal subunit. Contacts proteins S9 and S11.

Its function is as follows. One of the primary rRNA binding proteins, it binds directly to 16S rRNA where it nucleates assembly of the head domain of the 30S subunit. Is located at the subunit interface close to the decoding center, probably blocks exit of the E-site tRNA. The sequence is that of Small ribosomal subunit protein uS7 from Photorhabdus laumondii subsp. laumondii (strain DSM 15139 / CIP 105565 / TT01) (Photorhabdus luminescens subsp. laumondii).